The sequence spans 807 residues: Tyrosine-protein phosphatase non-receptor type 22 (807 aa).

Positions 24–289 (FANEFLKLKR…ELVYNAVLEL (266 aa)) constitute a Tyrosine-protein phosphatase domain. Phosphoserine; by PKC/PRKCD is present on Ser35. Residues Cys129 and Cys227 are joined by a disulfide bond. Cys227 functions as the Phosphocysteine intermediate in the catalytic mechanism. Substrate is bound by residues 227–233 (CSAGCGR) and Gln274. Ser449, Ser635, Ser684, and Ser692 each carry phosphoserine. Disordered regions lie at residues 676–700 (SVKL…LPER) and 724–746 (SYPD…GKSF).

The protein belongs to the protein-tyrosine phosphatase family. Non-receptor class 4 subfamily. In terms of assembly, interacts with CSK. Interacts with LPXN. Interacts with CBL. Interacts with TRAF3 (via MATH domain); the interaction promotes TRAF3 polyubiquitination. Phosphorylation on Ser-35 by PKC/PRKCD abrogates its ability to dephosphorylate and inactivate the SRC family kinases. In terms of tissue distribution, expressed in bone marrow, B and T-cells, PBMCs, natural killer cells, monocytes, dendritic cells and neutrophils. Both isoform 1 and 4 are predominantly expressed in lymphoid tissues and cells. Isoform 1 is expressed in thymocytes and both mature B and T-cells.

It is found in the cytoplasm. It catalyses the reaction O-phospho-L-tyrosyl-[protein] + H2O = L-tyrosyl-[protein] + phosphate. It carries out the reaction N-(5Z,8Z,11Z,14Z-eicosatetraenoyl)-ethanolamine phosphate + H2O = N-(5Z,8Z,11Z,14Z-eicosatetraenoyl)-ethanolamine + phosphate. Its activity is regulated as follows. Down-regulated by phosphorylation. In terms of biological role, acts as a negative regulator of T-cell receptor (TCR) signaling by direct dephosphorylation of the Src family kinases LCK and FYN, ITAMs of the TCRz/CD3 complex, as well as ZAP70, VAV, VCP and other key signaling molecules. Associates with and probably dephosphorylates CBL. Dephosphorylates LCK at its activating 'Tyr-394' residue. Dephosphorylates ZAP70 at its activating 'Tyr-493' residue. Dephosphorylates the immune system activator SKAP2. Positively regulates toll-like receptor (TLR)-induced type 1 interferon production. Promotes host antiviral responses mediated by type 1 interferon. Regulates NOD2-induced pro-inflammatory cytokine secretion and autophagy. Acts as an activator of NLRP3 inflammasome assembly by mediating dephosphorylation of 'Tyr-861' of NLRP3. Dephosphorylates phospho-anandamide (p-AEA), an endocannabinoid to anandamide (also called N-arachidonoylethanolamide). The protein is Tyrosine-protein phosphatase non-receptor type 22 (PTPN22) of Homo sapiens (Human).